The chain runs to 240 residues: Adenylate dimethylallyltransferase (240 aa).

It belongs to the isopentenyl transferase family.

The enzyme catalyses dimethylallyl diphosphate + AMP = N(6)-(dimethylallyl)adenosine 5'-phosphate + diphosphate. Its function is as follows. Transfers dimethylallyl groups to AMP as part of the biosynthesis of cytokinin phytohormones. This chain is Adenylate dimethylallyltransferase (ipt), found in Agrobacterium vitis (Rhizobium vitis).